The chain runs to 310 residues: HTH-type transcriptional activator TtdR (310 aa).

The HTH lysR-type domain maps to 6–63 (PLAKDLQVLVEIVHSGSFSAAAATLGQTPAFVTKRIQILENTLATTLLNRSARGVALT). Positions 23 to 42 (FSAAAATLGQTPAFVTKRIQ) form a DNA-binding region, H-T-H motif.

It belongs to the LysR transcriptional regulatory family.

Positive regulator required for L-tartrate-dependent anaerobic growth on glycerol. Induces expression of the ttdA-ttdB-ygjE operon. The sequence is that of HTH-type transcriptional activator TtdR (ttdR) from Escherichia coli O6:K15:H31 (strain 536 / UPEC).